The sequence spans 446 residues: Phosphoglucosamine mutase (446 aa).

Serine 99 functions as the Phosphoserine intermediate in the catalytic mechanism. Mg(2+) is bound by residues serine 99, aspartate 242, aspartate 244, and aspartate 246. Serine 99 bears the Phosphoserine mark.

This sequence belongs to the phosphohexose mutase family. Mg(2+) is required as a cofactor. In terms of processing, activated by phosphorylation.

The catalysed reaction is alpha-D-glucosamine 1-phosphate = D-glucosamine 6-phosphate. Catalyzes the conversion of glucosamine-6-phosphate to glucosamine-1-phosphate. This Campylobacter curvus (strain 525.92) protein is Phosphoglucosamine mutase.